The chain runs to 136 residues: Putative pre-16S rRNA nuclease (136 aa).

This sequence belongs to the YqgF nuclease family.

The protein localises to the cytoplasm. Could be a nuclease involved in processing of the 5'-end of pre-16S rRNA. The protein is Putative pre-16S rRNA nuclease of Francisella tularensis subsp. tularensis (strain FSC 198).